Reading from the N-terminus, the 326-residue chain is Serpentine receptor class alpha-12 (326 aa).

Residues 1–17 (MSCASEVQAQLFTHPVQ) are Extracellular-facing. The helical transmembrane segment at 18–38 (IIYACVQTVLFLATIIGSLLA) threads the bilayer. The Cytoplasmic portion of the chain corresponds to 39-54 (IVQLCKKTTIPDSTKV). The chain crosses the membrane as a helical span at residues 55-75 (LLIGALFFANAHELAYFSSPF). Topologically, residues 76 to 101 (KVFKMNLFHTNTSCYPLASTLECIPT) are extracellular. The chain crosses the membrane as a helical span at residues 102-122 (TTVLAMGISGNMLIQSALSIF). Residues 123 to 138 (RLLATIFPVCYSRMRA) are Cytoplasmic-facing. A helical transmembrane segment spans residues 139–159 (LPGVVLLFMVLIPSFLSYSWI). At 160–185 (RSDIVLDDYQMFCSQWSANISSRANT) the chain is on the extracellular side. A helical transmembrane segment spans residues 186–206 (YLEYCSYLTVAHIIINALIIL). Residues 207-234 (RNRSVESKCRFDVQQRYLNSETLKTTQT) lie on the Cytoplasmic side of the membrane. The chain crosses the membrane as a helical span at residues 235-255 (ICYLSIAQFLAMFLYSGGVLF). At 256–270 (MRKNQKNIPTLIYIN) the chain is on the extracellular side. A helical membrane pass occupies residues 271–291 (VIVWVYAPPYACVSLAPLILF). The Cytoplasmic segment spans residues 292–326 (SLWNLKKQRQIRIQSITVQKETQEDHIRKLQLSWG).

Belongs to the nematode receptor-like protein sra family.

Its subcellular location is the membrane. This chain is Serpentine receptor class alpha-12, found in Caenorhabditis briggsae.